A 244-amino-acid polypeptide reads, in one-letter code: 5-oxoprolinase subunit A (244 aa).

The protein belongs to the LamB/PxpA family. As to quaternary structure, forms a complex composed of PxpA, PxpB and PxpC.

It carries out the reaction 5-oxo-L-proline + ATP + 2 H2O = L-glutamate + ADP + phosphate + H(+). Catalyzes the cleavage of 5-oxoproline to form L-glutamate coupled to the hydrolysis of ATP to ADP and inorganic phosphate. This Shigella sonnei (strain Ss046) protein is 5-oxoprolinase subunit A.